Consider the following 423-residue polypeptide: Serine--tRNA ligase (423 aa).

L-serine is bound at residue 231 to 233; the sequence is TAE. 262 to 264 is an ATP binding site; the sequence is RSE. An L-serine-binding site is contributed by E285. 349-352 contacts ATP; it reads EIGS. S385 is a binding site for L-serine.

It belongs to the class-II aminoacyl-tRNA synthetase family. Type-1 seryl-tRNA synthetase subfamily. Homodimer. The tRNA molecule binds across the dimer.

It localises to the cytoplasm. The enzyme catalyses tRNA(Ser) + L-serine + ATP = L-seryl-tRNA(Ser) + AMP + diphosphate + H(+). It carries out the reaction tRNA(Sec) + L-serine + ATP = L-seryl-tRNA(Sec) + AMP + diphosphate + H(+). It functions in the pathway aminoacyl-tRNA biosynthesis; selenocysteinyl-tRNA(Sec) biosynthesis; L-seryl-tRNA(Sec) from L-serine and tRNA(Sec): step 1/1. Catalyzes the attachment of serine to tRNA(Ser). Is also able to aminoacylate tRNA(Sec) with serine, to form the misacylated tRNA L-seryl-tRNA(Sec), which will be further converted into selenocysteinyl-tRNA(Sec). The protein is Serine--tRNA ligase of Acholeplasma laidlawii (strain PG-8A).